The primary structure comprises 740 residues: Transcription activator of gluconeogenesis NCU03938 (740 aa).

A disordered region spans residues 1–66; sequence MPDDVGPAEA…KYDPKDPLRP (66 aa). Over residues 19–37 the composition is skewed to acidic residues; sequence SDNEYDETEVTTKDDDDEK. Residues 52–65 are compositionally biased toward basic and acidic residues; sequence GDQKKKYDPKDPLR. Residues 75-103 constitute a DNA-binding region (zn(2)-C6 fungal-type); sequence CYACQRAHLTCGDERPCQRCIKRGLAEAC. Disordered regions lie at residues 333 to 405, 532 to 579, and 639 to 674; these read PAGP…RQRD, NSDT…KEQP, and APTASGGSGSSNGTVVNGGPDSSPAGKTEKERPTGV. Residues 337-351 show a composition bias toward polar residues; that stretch reads TSLQSPSTENNSPQP. The PAS domain maps to 475–546; it reads ALFEHEEFMH…SISSKGGRGG (72 aa). Positions 639 to 658 are enriched in low complexity; that stretch reads APTASGGSGSSNGTVVNGGP.

Belongs to the ERT1/acuK family.

The protein localises to the nucleus. In terms of biological role, transcription factor which regulates nonfermentable carbon utilization. Activator of gluconeogenetic genes. In Neurospora crassa (strain ATCC 24698 / 74-OR23-1A / CBS 708.71 / DSM 1257 / FGSC 987), this protein is Transcription activator of gluconeogenesis NCU03938.